The primary structure comprises 126 residues: Glycine cleavage system H protein (126 aa).

The 83-residue stretch at 22–104 folds into the Lipoyl-binding domain; that stretch reads VATVGITEYA…YEKAWMVKIE (83 aa). N6-lipoyllysine is present on lysine 63.

It belongs to the GcvH family. In terms of assembly, the glycine cleavage system is composed of four proteins: P, T, L and H. (R)-lipoate serves as cofactor.

Functionally, the glycine cleavage system catalyzes the degradation of glycine. The H protein shuttles the methylamine group of glycine from the P protein to the T protein. Its function is as follows. Is also involved in protein lipoylation via its role as an octanoyl/lipoyl carrier protein intermediate. This is Glycine cleavage system H protein from Staphylococcus epidermidis (strain ATCC 12228 / FDA PCI 1200).